A 489-amino-acid polypeptide reads, in one-letter code: Ulvan Lyase-PL25 (489 aa).

An N-terminal signal peptide occupies residues 1–31 (MNLNKTLRKNSPSGYKALLTFSIICGLMATG). C32 carries the N-palmitoyl cysteine lipid modification. Residue C32 is the site of S-diacylglycerol cysteine attachment. The substrate site is built by N60 and N122. H123 acts as the Proton donor in catalysis. Substrate-binding residues include K125 and H143. Y188 acts as the Proton acceptor in catalysis. Substrate is bound by residues R204, H208, and Y246. Residue H208 participates in Zn(2+) binding. Zn(2+) contacts are provided by H264, C266, and H278. H278 contacts substrate.

Belongs to the polysaccharide lyase 25 family.

The protein localises to the cell membrane. Ulvan lyase involved in ulvan degradation. Ulvan is the main polysaccharide component of the Ulvales (green seaweed) cell wall. It is composed of disaccharide building blocks comprising 3-sulfated rhamnose (Rha3S) linked to D-glucuronic acid (GlcA), L-iduronic acid (IduA), or D-xylose (Xyl). Ulvan lyase catalyzes the endolytic cleavage of the glycosidic bond between Rha3S and the uronic acids GlcA or IduA, producing oligosaccharides that have unsaturated 4-deoxy-L-threo-hex-4-enopyranosiduronic acid (deltaUA) at the non-reducing end. This results eventually in the degradation of the ulvan polysaccharide into deltaUA-Rha3S disaccharides and deltaUA-Rha3S-Xyl-Rha3S tetrasaccharides. The protein is Ulvan Lyase-PL25 of Pseudoalteromonas sp. (strain PLSV).